Here is a 151-residue protein sequence, read N- to C-terminus: Cell division control protein 2 homolog 2 (151 aa).

A Protein kinase domain is found at 1 to 151 (ALKEIRMDNE…IMQTLQIESL (151 aa)). Lys-3 lines the ATP pocket. Asp-113 (proton acceptor) is an active-site residue.

The protein belongs to the protein kinase superfamily. CMGC Ser/Thr protein kinase family. CDC2/CDKX subfamily.

The enzyme catalyses L-seryl-[protein] + ATP = O-phospho-L-seryl-[protein] + ADP + H(+). The catalysed reaction is L-threonyl-[protein] + ATP = O-phospho-L-threonyl-[protein] + ADP + H(+). It catalyses the reaction [DNA-directed RNA polymerase] + ATP = phospho-[DNA-directed RNA polymerase] + ADP + H(+). The protein is Cell division control protein 2 homolog 2 of Pisum sativum (Garden pea).